A 350-amino-acid chain; its full sequence is uncharacterized protein (350 aa).

Disordered stretches follow at residues 1 to 21 (MDSFHPTPGKPTTATSNSSLN), 237 to 266 (NSDVIESSAEDSSNTDNPSTKPSNEMPISP), and 278 to 298 (EMSTPNSNHSRSRTPSSKKRT). 2 stretches are compositionally biased toward polar residues: residues 10 to 21 (KPTTATSNSSLN) and 246 to 259 (EDSSNTDNPSTKPS). The span at 287–298 (SRSRTPSSKKRT) shows a compositional bias: basic residues.

The protein localises to the nucleus. This is an uncharacterized protein from Schizosaccharomyces pombe (strain 972 / ATCC 24843) (Fission yeast).